Here is a 334-residue protein sequence, read N- to C-terminus: Sensor protein BceS (334 aa).

The Cytoplasmic segment spans residues 1 to 12; it reads MIKAFLIERRSW. The chain crosses the membrane as a helical span at residues 13 to 33; sequence IAAFLFQQALMLFIAFVDPSI. Position 34 (S34) is a topological domain, extracellular. Residues 35 to 55 traverse the membrane as a helical segment; sequence FGNVLYMVYLCILFFIIFLWF. Residues 56–334 are Cytoplasmic-facing; it reads RYRKETAFYK…RNQFEHVISV (279 aa). The region spanning 121–326 is the Histidine kinase domain; it reads AWIHEVKTPL…VFTLTFPIRN (206 aa). At H124 the chain carries Phosphohistidine; by autocatalysis.

It is found in the cell membrane. It carries out the reaction ATP + protein L-histidine = ADP + protein N-phospho-L-histidine.. Its function is as follows. Member of the two-component regulatory system BceS/BceR involved in the regulation of bacitracin resistance. Activates BceR in response to extracellular bacitracin. In Bacillus subtilis (strain 168), this protein is Sensor protein BceS (bceS).